The primary structure comprises 612 residues: MFS siderochrome iron transporter B (612 aa).

Topologically, residues 1 to 86 (MLHVLSVGPS…GAQAGVKKIE (86 aa)) are cytoplasmic. Positions 55–78 (DKEAAHAPANAETNNEEANPSDGA) are disordered. A compositionally biased stretch (low complexity) spans 60-72 (HAPANAETNNEEA). Residues 87 to 104 (AVTLSWTRGTAIWFLTLV) traverse the membrane as a helical segment. Residues 105–127 (NDFRLSMYTSLNAYATSSFLGHS) lie on the Extracellular side of the membrane. Residues 128–148 (LLTVINIVSYVMGGSVYIPMA) traverse the membrane as a helical segment. Topologically, residues 149 to 156 (KALDLWGR) are cytoplasmic. A helical transmembrane segment spans residues 157 to 177 (AEGFLLMTFFCILGLILLASS). The Extracellular portion of the chain corresponds to 178–187 (QNLPTYCAGQ). The helical transmembrane segment at 188 to 208 (VFYKVGFGGLSYTWNVLAADV) threads the bilayer. The Cytoplasmic portion of the chain corresponds to 209 to 215 (TNLRNRG). The helical transmembrane segment at 216–236 (LAFAFTSSPALISAFAGSKAA) threads the bilayer. The Extracellular segment spans residues 237–246 (SDLLAHSTWR). Residues 247-267 (WGFGMWAIILPVVALPIYGLL) form a helical membrane-spanning segment. At 268–302 (AYHLRQAEKKGVLVKETRDWSITPKTVWWAIMEFD) the chain is on the cytoplasmic side. Residues 303-323 (LPGVLLFAGGFVIFLLPFTLA) traverse the membrane as a helical segment. The Extracellular portion of the chain corresponds to 324 to 334 (ATAPHGYQTDY). The chain crosses the membrane as a helical span at residues 335–355 (IIAMITLGLALIIAFGFYEML). The Cytoplasmic portion of the chain corresponds to 356 to 370 (VAPVPFLNYKFLIDR). A helical membrane pass occupies residues 371 to 393 (TVLGACLLDMTYQVSYYCYASYL). Residues 394 to 409 (PSFLQVVYELDVATAG) are Extracellular-facing. The helical transmembrane segment at 410-430 (YVTNTFSVVSFVFLFFAGWLI) threads the bilayer. Over 431–435 (RWTGR) the chain is Cytoplasmic. The chain crosses the membrane as a helical span at residues 436 to 456 (FKWILWVCVPLYIFGLGLMIH). Residues 457 to 463 (FRQPGGY) are Extracellular-facing. A helical transmembrane segment spans residues 464–484 (IGYIVMCEIFFSVAGSVFILC). Topologically, residues 485–498 (VQLAVLASVDHQHV) are cytoplasmic. The helical transmembrane segment at 499–519 (AAVLALLFVMGSIGGSIGSAI) threads the bilayer. Over 520 to 575 (CGAIWTSTFLSRLERNLPASAMPDLSLIYSSLPTQLSYPVGSATRTAIVEAYGYAQ) the chain is Extracellular. Residues 576-596 (ARMLIAGTAFMVLGFIWVGMM) form a helical membrane-spanning segment. Residues 597 to 612 (RNLNVKNMTQTKGNVV) lie on the Cytoplasmic side of the membrane.

Belongs to the major facilitator superfamily.

The protein localises to the cell tip. The protein resides in the cytoplasmic vesicle membrane. It localises to the cell membrane. In terms of biological role, major facilitator transporter involved in triacetylfusarinine C (TAFC) uptake. Can also transport ferricrocin and coprogen, but not ferrichrysin. MirB plays a crucial role for virulence in a murine model of pulmonary aspergillosis, indicating that TAFC-mediated iron uptake plays a dominant role during infection. This Aspergillus fumigatus (strain ATCC MYA-4609 / CBS 101355 / FGSC A1100 / Af293) (Neosartorya fumigata) protein is MFS siderochrome iron transporter B.